The following is a 109-amino-acid chain: Small ribosomal subunit protein bS6c (109 aa).

The protein belongs to the bacterial ribosomal protein bS6 family.

It is found in the plastid. It localises to the chloroplast. Functionally, binds together with bS18 to 16S ribosomal RNA. This Pyropia yezoensis (Susabi-nori) protein is Small ribosomal subunit protein bS6c.